The sequence spans 272 residues: Sordarin/hypoxysordarin biosynthesis cluster protein P (272 aa).

Asparagine 6 and asparagine 23 each carry an N-linked (GlcNAc...) asparagine glycan. 2 consecutive transmembrane segments (helical) span residues 31–51 and 67–87; these read FLAS…LLFL and AYHM…VDLA. An N-linked (GlcNAc...) asparagine glycan is attached at asparagine 208.

It is found in the membrane. It functions in the pathway antibiotic biosynthesis. Its function is as follows. Part of the gene cluster that mediates the biosynthesis of sordarin and hypoxysordarin, glycoside antibiotics with a unique tetracyclic diterpene aglycone structure. First, the geranylgeranyl diphosphate synthase sdnC constructs GGDP from farnesyl diphosphate and isopentenyl diphosphate. The diterpene cyclase sdnA then catalyzes the cyclization of GGDP to afford cycloaraneosene. Cycloaraneosene is then hydroxylated four times by the putative cytochrome P450 monooxygenases sdnB, sdnE, sdnF and sdnH to give a hydroxylated cycloaraneosene derivative such as cycloaraneosene-8,9,13,19-tetraol. Although the order of the hydroxylations is unclear, at least C8, C9 and C13 of the cycloaraneosene skeleton are hydroxylated before the sordaricin formation. Dehydration of the 13-hydroxy group of the hydroxylated cycloaraneosene derivative might be catalyzed by an unassigned hypothetical protein such as sdnG and sdnP to construct the cyclopentadiene moiety. The FAD-dependent oxidoreductase sdnN is proposed to catalyze the oxidation at C9 of the hydroxylated cycloaraneosene derivative and also catalyze the Baeyer-Villiger oxidation to give the lactone intermediate. The presumed lactone intermediate would be hydrolyzed to give an acrolein moiety and a carboxylate moiety. Then, [4+2]cycloaddition would occur between the acrolein moiety and the cyclopentadiene moiety to give sordaricin. SdnN might also be involved in the [4+2]cycloaddition after the hypothesized oxidation to accommodate the oxidized product and prompt the [4+2]cycloaddition. GDP-6-deoxy-D-altrose may be biosynthesized from GDP-D-mannose by the putative GDP-mannose-4,6-dehydratase sdnI and the short-chain dehydrogenase sdnK. The glycosyltransferase sdnJ catalyzes the attachment of 6-deoxy-D-altrose onto the 19-hydroxy group of sordaricin to give 4'-O-demethylsordarin. The methyltransferase sdnD would complete the biosynthesis of sordarin. Sordarin can be further modified into hypoxysordarin. The unique acyl chain at the 3'-hydroxy group of hypoxysordarin would be constructed by an iterative type I PKS sdnO and the trans-acting polyketide methyltransferase sdnL. SdnL would be responsible for the introduction of an alpha-methyl group of the polyketide chain. Alternatively, the beta-lactamase-like protein sdnR might be responsible for the cleavage and transfer of the polyketide chain from the PKS sdnO to sordarin. Two putative cytochrome P450 monooxygenases, sdnQ and sdnT, might catalyze the epoxidations of the polyketide chain to complete the biosynthesis of hypoxysordarin. Transcriptional regulators sdnM and sdnS are presumably encoded for the transcriptional regulation of the expression of the sdn gene cluster. The sequence is that of Sordarin/hypoxysordarin biosynthesis cluster protein P from Sordaria araneosa (Pleurage araneosa).